A 319-amino-acid polypeptide reads, in one-letter code: Formimidoylglutamase (319 aa).

Mn(2+) contacts are provided by histidine 127, aspartate 150, histidine 152, aspartate 154, aspartate 242, and aspartate 244.

The protein belongs to the arginase family. Requires Mn(2+) as cofactor.

The enzyme catalyses N-formimidoyl-L-glutamate + H2O = formamide + L-glutamate. It participates in amino-acid degradation; L-histidine degradation into L-glutamate; L-glutamate from N-formimidoyl-L-glutamate (hydrolase route): step 1/1. Its function is as follows. Catalyzes the conversion of N-formimidoyl-L-glutamate to L-glutamate and formamide. This is Formimidoylglutamase from Halalkalibacterium halodurans (strain ATCC BAA-125 / DSM 18197 / FERM 7344 / JCM 9153 / C-125) (Bacillus halodurans).